The chain runs to 338 residues: Phosphonates-binding periplasmic protein (338 aa).

The signal sequence occupies residues 1–26 (MNAKIIASLAFTSMFSLSTLLSPAHA).

Belongs to the phosphate/phosphite/phosphonate binding protein family. As to quaternary structure, the complex is composed of two ATP-binding proteins (PhnC), two transmembrane proteins (PhnE) and a solute-binding protein (PhnD).

It is found in the periplasm. In terms of biological role, phosphonate binding protein that is part of the phosphonate uptake system. Exhibits high affinity for 2-aminoethylphosphonate, and somewhat less affinity to ethylphosphonate, methylphosphonate, phosphonoacetate and phenylphosphonate. The sequence is that of Phosphonates-binding periplasmic protein (phnD) from Escherichia coli (strain K12).